We begin with the raw amino-acid sequence, 594 residues long: ATPase family AAA domain-containing protein 3 (594 aa).

The interval 1–50 (MSWLFGLNKGQQGPPSVPGFPEPPSPPGGSGDGGDKNKPKDKWSNFDPTG) is disordered. The Mitochondrial intermembrane segment spans residues 1–242 (MSWLFGLNKG…FRAFISDWDK (242 aa)). Positions 15–27 (PSVPGFPEPPSPP) are enriched in pro residues. Over residues 33–44 (GGDKNKPKDKWS) the composition is skewed to basic and acidic residues. The stretch at 51–213 (LERAAKAARE…RENIRLKAAE (163 aa)) forms a coiled coil. A helical membrane pass occupies residues 243-260 (VTATVAGLSLLAVGIYTA). At 261–594 (KNATGVAGRY…LQPLLEGTPV (334 aa)) the chain is on the mitochondrial matrix side. Residue 348-355 (GPPGTGKT) coordinates ATP. Over residues 571 to 581 (EGKENAAKESG) the composition is skewed to basic and acidic residues. Residues 571–594 (EGKENAAKESGKNPLQPLLEGTPV) are disordered.

Belongs to the AAA ATPase family.

It localises to the mitochondrion inner membrane. The protein localises to the mitochondrion matrix. Its subcellular location is the mitochondrion nucleoid. Its function is as follows. Essential for mitochondrial network organization, mitochondrial metabolism and cell growth at organism and cellular level. May play an important role in mitochondrial protein synthesis. May also participate in mitochondrial DNA replication. May bind to mitochondrial DNA D-loops and contribute to nucleoid stability. Required for enhanced channeling of cholesterol for hormone-dependent steroidogenesis. This Xenopus tropicalis (Western clawed frog) protein is ATPase family AAA domain-containing protein 3 (atad3).